The primary structure comprises 334 residues: Glyoxylate reductase (334 aa).

NADP(+) is bound by residues F158–I161, S180–T182, and I239–R241. Catalysis depends on residues R241 and E270. H288 (proton donor) is an active-site residue. H288–G290 is a binding site for NADP(+).

The protein belongs to the D-isomer specific 2-hydroxyacid dehydrogenase family. GyaR subfamily. As to quaternary structure, homodimer.

It localises to the cytoplasm. It carries out the reaction glycolate + NAD(+) = glyoxylate + NADH + H(+). This Thermococcus gammatolerans (strain DSM 15229 / JCM 11827 / EJ3) protein is Glyoxylate reductase.